The primary structure comprises 194 residues: Large ribosomal subunit protein bL9 (194 aa).

The protein belongs to the bacterial ribosomal protein bL9 family.

In terms of biological role, binds to the 23S rRNA. This is Large ribosomal subunit protein bL9 from Paracoccus denitrificans (strain Pd 1222).